A 217-amino-acid chain; its full sequence is Small ribosomal subunit protein eS6 (217 aa).

This sequence belongs to the eukaryotic ribosomal protein eS6 family. In terms of processing, phosphorylated.

The polypeptide is Small ribosomal subunit protein eS6 (RPS6) (Encephalitozoon cuniculi (strain GB-M1) (Microsporidian parasite)).